The following is a 350-amino-acid chain: MKKIRLELVYLRAIICAIIIVTHLLTQITLKHENMEGGSLVLQFYIRNIVIFGTPCFIILSQLLTTLNYQKVTYRYLTTRVKYILIPYILMGLFYSYSESLLTDTSFQKQFIENVLLGQWYGYFIVVIMQFFILSYIIFKINYNLFNSKILLLLSFILQQSFLYYFTNNTAFHDTVLHYYPLSENTIIFGWIFYFFLGAYMGYNYERVLNFLERYLVIMIVLAVATYFVFIALANGDYWNVTSFSYSLTPYNSIMFIVILGICTHFKTMLFNTIQMISAFSFFIYLLHPIILDSLFAYTNIFEDNTMVFLAISLLFILGLCIGVGMILREFYIFRFIIGKQPYKLNINAY.

The next 10 membrane-spanning stretches (helical) occupy residues 7-29 (ELVY…TQIT), 44-66 (FYIR…LLTT), 79-101 (TRVK…SESL), 116-138 (LLGQ…SYII), 145-167 (LFNS…YYFT), 187-204 (IIFG…MGYN), 211-233 (FLER…FIAL), 243-262 (SFSY…ILGI), 269-291 (MLFN…HPII), and 306-328 (TMVF…GMIL).

It belongs to the acyltransferase 3 family.

The protein resides in the cell membrane. Its function is as follows. Presumably involved in the export of the biofilm adhesin polysaccharide poly-beta-1,6-N-acetyl-D-glucosamine (PNAG, also referred to as PIA) across the cell membrane. This chain is Probable poly-beta-1,6-N-acetyl-D-glucosamine export protein (icaC), found in Staphylococcus aureus (strain MRSA252).